A 99-amino-acid polypeptide reads, in one-letter code: MGWYCLDRDHNLILKLYIQPGARQTEAIGVHGEELKIKLAAPPMDGKANRALAVFLAKRFNVPLKHITLKWGAQSRHKVVEIYQPVNGPEVLFNEIRAE.

It belongs to the UPF0235 family.

The polypeptide is UPF0235 protein Neut_2146 (Nitrosomonas eutropha (strain DSM 101675 / C91 / Nm57)).